We begin with the raw amino-acid sequence, 1157 residues long: DNA-directed RNA polymerase subunit beta (1157 aa).

Belongs to the RNA polymerase beta chain family. As to quaternary structure, the RNAP catalytic core consists of 2 alpha, 1 beta, 1 beta' and 1 omega subunit. When a sigma factor is associated with the core the holoenzyme is formed, which can initiate transcription.

It catalyses the reaction RNA(n) + a ribonucleoside 5'-triphosphate = RNA(n+1) + diphosphate. DNA-dependent RNA polymerase catalyzes the transcription of DNA into RNA using the four ribonucleoside triphosphates as substrates. This Tropheryma whipplei (Whipple's bacillus) protein is DNA-directed RNA polymerase subunit beta.